A 737-amino-acid chain; its full sequence is MENMAEEELLPQEKVEVVQVPVPTPTPDSARVPAPAPDSAPVSASTPAPASAPTPASAPVPAPALAQASALSPSLASAPDEAESKRHISIQRQLADLEKLAFVTEGDCDSANSLNSDNLDAGNKQACPLCPKEKFRACNSHKLHRHLQNLHWKVSVEFEGYRMCICHLPCRPVKPNIIGEQISSKMGAHYHCIICSATITRRTDMLGHVRRHVNKGETKSRYIAASAAKPPKEILKEADTDVQVCPNYTVPQKTDSYFNPKMKLNRQLIFCTLAALAKERKPLECLDAFGATGIMGLQWAKHLGNAVKVTINDLNENSVTLIQENCHLNKLKVVVDSKEKEEREDILEEGEENLGNIKVTKMDANVLMHLRSFDFIHLDPFGTSVNYLDSAFRNIRNLGIVSVTSTDISSLYAKAQHVARRHYGCNIVRTEYYKELAARIVVAAVARAAARCNKGIEVLFAVALEHFVLVVVRVLRGPTSADETAKKIQYLIHCQWCEERIFQKDGNMVEENPYRQLPCNCHGSMPGKTAIELGPLWSSSLFNTGFLKRMLSESLHHGLDDIQTLIKTLIFESECTPQFSVHAPSNLNKPEECGVFIKTTDDTTTDSHSAQGKRKSNETTANLVKRQKTDVNTEHPPFYYNIHRHSIKGMNMPKLKKFLCYLSQAGFRVSRTHFDPMGVRTDAPLMQFKSILLKYSTPTYTGGQSEGHVQPASEDTVADRVEMSVNDKAEAGGCRRW.

Residues methionine 1–leucine 10 are compositionally biased toward acidic residues. Residues methionine 1–leucine 65 form a disordered region. Positions valine 17 to proline 49 are enriched in low complexity. Phosphothreonine is present on threonine 24. Residues alanine 50–alanine 62 show a composition bias toward pro residues. Serine 72 carries the phosphoserine modification. The short motif at histidine 141–arginine 145 is the Nucleolar localization signal element. The C2H2-type zinc finger occupies tyrosine 190 to histidine 212. The 460-residue stretch at glutamate 233–leucine 692 folds into the Trm1 methyltransferase domain. The S-adenosyl-L-methionine site is built by arginine 266, aspartate 313, aspartate 363, and alanine 364. Positions 494, 497, 519, and 521 each coordinate Zn(2+). Lysine 589 participates in a covalent cross-link: Glycyl lysine isopeptide (Lys-Gly) (interchain with G-Cter in SUMO2). Residue serine 616 is modified to Phosphoserine.

It belongs to the class I-like SAM-binding methyltransferase superfamily. Trm1 family.

The protein localises to the nucleus. It is found in the nucleolus. The enzyme catalyses guanosine(27) in tRNA(Tyr) + 2 S-adenosyl-L-methionine = N(2)-dimethylguanosine(27) in tRNA(Tyr) + 2 S-adenosyl-L-homocysteine + 2 H(+). Functionally, specifically dimethylates a single guanine residue at position 27 of tRNA(Tyr) using S-adenosyl-L-methionine as donor of the methyl groups. Dimethylation at position 27 of tRNA(Tyr) is required for efficient translation of tyrosine codons. Also required to maintain 3-(3-amino-3-carboxypropyl)uridine (acp3U) in the D-loop of several cytoplasmic tRNAs. This chain is tRNA (guanine(27)-N(2))-dimethyltransferase (TRMT1L), found in Bos taurus (Bovine).